The chain runs to 485 residues: D-alanine--D-alanyl carrier protein ligase (485 aa).

144-145 (TS) is a binding site for ATP. D189 provides a ligand contact to D-alanine. An ATP-binding site is contributed by 284–289 (NTYGPT). V293 is a binding site for D-alanine. Residues D365 and K473 each contribute to the ATP site. K473 serves as a coordination point for D-alanine.

The protein belongs to the ATP-dependent AMP-binding enzyme family. DltA subfamily.

Its subcellular location is the cytoplasm. The catalysed reaction is holo-[D-alanyl-carrier protein] + D-alanine + ATP = D-alanyl-[D-alanyl-carrier protein] + AMP + diphosphate. The protein operates within cell wall biogenesis; lipoteichoic acid biosynthesis. Its function is as follows. Catalyzes the first step in the D-alanylation of lipoteichoic acid (LTA), the activation of D-alanine and its transfer onto the D-alanyl carrier protein (Dcp) DltC. In an ATP-dependent two-step reaction, forms a high energy D-alanyl-AMP intermediate, followed by transfer of the D-alanyl residue as a thiol ester to the phosphopantheinyl prosthetic group of the Dcp. D-alanylation of LTA plays an important role in modulating the properties of the cell wall in Gram-positive bacteria, influencing the net charge of the cell wall. This chain is D-alanine--D-alanyl carrier protein ligase, found in Staphylococcus haemolyticus (strain JCSC1435).